The following is a 271-amino-acid chain: Type III pantothenate kinase (271 aa).

6 to 13 (DVRNTHTV) is an ATP binding site. 109 to 112 (GADR) serves as a coordination point for substrate. Asp111 acts as the Proton acceptor in catalysis. Asp131 contacts K(+). Ser134 serves as a coordination point for ATP. Thr186 contacts substrate.

This sequence belongs to the type III pantothenate kinase family. Homodimer. NH4(+) serves as cofactor. It depends on K(+) as a cofactor.

It is found in the cytoplasm. The catalysed reaction is (R)-pantothenate + ATP = (R)-4'-phosphopantothenate + ADP + H(+). Its pathway is cofactor biosynthesis; coenzyme A biosynthesis; CoA from (R)-pantothenate: step 1/5. Functionally, catalyzes the phosphorylation of pantothenate (Pan), the first step in CoA biosynthesis. In Mycolicibacterium smegmatis (strain ATCC 700084 / mc(2)155) (Mycobacterium smegmatis), this protein is Type III pantothenate kinase.